Here is a 380-residue protein sequence, read N- to C-terminus: ATP phosphoribosyltransferase regulatory subunit (380 aa).

It belongs to the class-II aminoacyl-tRNA synthetase family. HisZ subfamily. Heteromultimer composed of HisG and HisZ subunits.

The protein resides in the cytoplasm. Its pathway is amino-acid biosynthesis; L-histidine biosynthesis; L-histidine from 5-phospho-alpha-D-ribose 1-diphosphate: step 1/9. Its function is as follows. Required for the first step of histidine biosynthesis. May allow the feedback regulation of ATP phosphoribosyltransferase activity by histidine. This chain is ATP phosphoribosyltransferase regulatory subunit, found in Thermoanaerobacter sp. (strain X514).